Consider the following 349-residue polypeptide: Ribosomal RNA small subunit methyltransferase C (349 aa).

It belongs to the methyltransferase superfamily. RsmC family. As to quaternary structure, monomer.

It is found in the cytoplasm. The enzyme catalyses guanosine(1207) in 16S rRNA + S-adenosyl-L-methionine = N(2)-methylguanosine(1207) in 16S rRNA + S-adenosyl-L-homocysteine + H(+). Its function is as follows. Specifically methylates the guanine in position 1207 of 16S rRNA in the 30S particle. This is Ribosomal RNA small subunit methyltransferase C from Psychromonas ingrahamii (strain DSM 17664 / CCUG 51855 / 37).